The primary structure comprises 376 residues: Chaperone protein DnaJ (376 aa).

Residues Asp-5–Gly-70 form the J domain. The CR-type zinc-finger motif lies at Gly-132–Ser-210. Positions 145, 148, 162, 165, 184, 187, 198, and 201 each coordinate Zn(2+). CXXCXGXG motif repeat units follow at residues Cys-145 to Gly-152, Cys-162 to Gly-169, Cys-184 to Gly-191, and Cys-198 to Gly-205.

This sequence belongs to the DnaJ family. Homodimer. Zn(2+) is required as a cofactor.

The protein localises to the cytoplasm. Functionally, participates actively in the response to hyperosmotic and heat shock by preventing the aggregation of stress-denatured proteins and by disaggregating proteins, also in an autonomous, DnaK-independent fashion. Unfolded proteins bind initially to DnaJ; upon interaction with the DnaJ-bound protein, DnaK hydrolyzes its bound ATP, resulting in the formation of a stable complex. GrpE releases ADP from DnaK; ATP binding to DnaK triggers the release of the substrate protein, thus completing the reaction cycle. Several rounds of ATP-dependent interactions between DnaJ, DnaK and GrpE are required for fully efficient folding. Also involved, together with DnaK and GrpE, in the DNA replication of plasmids through activation of initiation proteins. In Shewanella sp. (strain W3-18-1), this protein is Chaperone protein DnaJ.